Reading from the N-terminus, the 274-residue chain is Tyrosinase (274 aa).

The Cu cation site is built by His-38, His-54, His-63, His-190, His-194, and His-216.

The protein belongs to the tyrosinase family. The cofactor is Cu(2+).

It catalyses the reaction 2 L-dopa + O2 = 2 L-dopaquinone + 2 H2O. It carries out the reaction L-tyrosine + O2 = L-dopaquinone + H2O. This is a copper-containing oxidase that functions in the formation of pigments such as melanins and other polyphenolic compounds. The protein is Tyrosinase (melC2) of Streptomyces glaucescens.